The following is a 697-amino-acid chain: Protein Niban 3 (697 aa).

The disordered stretch occupies residues 1-48; that stretch reads MGPDRKEVPLSRGTQAVVVGKGRGAPGDDSSMGGRPSSPLDKQQRQHL.

The protein belongs to the Niban family. As to expression, specifically expressed in B-lymphocytes.

This is Protein Niban 3 from Homo sapiens (Human).